Consider the following 836-residue polypeptide: TATA box-binding protein-associated factor RNA polymerase I subunit C (836 aa).

Disordered regions lie at residues 662–683 and 703–836; these read GDLS…QQDE and HRGE…RMGF. Residues 738–754 are compositionally biased toward polar residues; the sequence is DASSAPRSQDLSTSEAR. The segment covering 780–796 has biased composition (basic and acidic residues); sequence RQTLRDHTDKLPLKRDT. Position 802 is a phosphothreonine (Thr802). Polar residues predominate over residues 803 to 828; sequence PPSQASSLQTMSFRQQTPVHSGSQPP.

Component of the transcription factor SL1/TIF-IB complex, composed of TBP and at least TAF1A, TAF1B, TAF1C and TAF1D. In the complex interacts directly with TBP, TAF1A and TAF1B. Interaction of the SL1/TIF-IB subunits with TBP excludes interaction of TBP with the transcription factor IID (TFIID) subunits. Interacts with MYC and RRN3. Interacts with p53/TP53; the interaction prevents the association of SL1/TIF-IB with UBTF and represses RNA polymerase I transcription. Part of Pol I pre-initiation complex (PIC), in which Pol I core assembles with RRN3 and promoter-bound UTBF and SL1/TIF-IB complex.

It localises to the nucleus. The protein localises to the nucleolus. Component of the transcription factor SL1/TIF-IB complex, which is involved in the assembly of the PIC (pre-initiation complex) during RNA polymerase I-dependent transcription. The rate of PIC formation probably is primarily dependent on the rate of association of SL1/TIF-IB with the rDNA promoter. SL1/TIF-IB is involved in stabilization of nucleolar transcription factor 1/UBTF on rDNA. Formation of SL1/TIF-IB excludes the association of TBP with TFIID subunits. Recruits RNA polymerase I to the rRNA gene promoter via interaction with RRN3. The chain is TATA box-binding protein-associated factor RNA polymerase I subunit C (Taf1c) from Mus musculus (Mouse).